A 363-amino-acid chain; its full sequence is Ly6/PLAUR domain-containing protein 3 (363 aa).

A signal peptide spans M1–A32. The region spanning C35–P128 is the UPAR/Ly6 1 domain. Residues N120, N131, N178, and N185 are each glycosylated (N-linked (GlcNAc...) asparagine). One can recognise a UPAR/Ly6 2 domain in the interval C142–N224. A compositionally biased stretch (pro residues) spans P238–T248. 2 disordered regions span residues P238–H287 and L301–Q336. Positions A249 to T278 are enriched in low complexity. The span at G304–A318 shows a compositional bias: gly residues. Basic and acidic residues predominate over residues H320–P330. The GPI-anchor amidated serine moiety is linked to residue S343. Positions G344–L363 are cleaved as a propeptide — removed in mature form.

As to quaternary structure, binds laminin-1 and laminin-5. Interacts with LGALS3. Interacts with AGR2 and AGR3.

It localises to the cell membrane. Its function is as follows. Supports cell migration. May be involved in tumor progression. In Mus musculus (Mouse), this protein is Ly6/PLAUR domain-containing protein 3 (Lypd3).